A 213-amino-acid polypeptide reads, in one-letter code: Ribonuclease HII (213 aa).

In terms of domain architecture, RNase H type-2 spans 27–213 (HAVAGVDEAG…FRGVKEHVAP (187 aa)). A divalent metal cation contacts are provided by Asp33, Glu34, and Asp125.

Belongs to the RNase HII family. Mn(2+) serves as cofactor. It depends on Mg(2+) as a cofactor.

It is found in the cytoplasm. It carries out the reaction Endonucleolytic cleavage to 5'-phosphomonoester.. In terms of biological role, endonuclease that specifically degrades the RNA of RNA-DNA hybrids. This Geobacter metallireducens (strain ATCC 53774 / DSM 7210 / GS-15) protein is Ribonuclease HII.